The sequence spans 503 residues: MLNIRPDEISNVIRQQIDKYEQEIQVANIGTVLQVGDGIARVYGLDEVMAGELLEFEDQTIGIALNLESDNVGVVLMGEGRNILEGSSVKATGKIAQIPVGDAFLGRVVDPLARPIDAKGLPNSSGTRLIESYAPGIIGRQSVCEPLQTGITAIDSMIPIGRGQRELIIGDRQTGKTAVALDTIINQKGQDVVCIYVAIGQKASSVAQVVSTLQDESALDYTIVVASNADDPATLQYIAPYTGAALAEYFMYKGKATLVVYDDLTKQAQAYRQMSLLLRRPPGREAYPGDVFYLHSRLLERAAKLNSELGGGSMTALPIIETQAGDVSAYIPTNVISITDGQIFLSGDLFNSGIRPAINVGISVSRVGSAAQIKAMKQVAGKLKLELAQFAELEAFSQFASDLDKATQNQLSRGQRLREILKQAQNSPIPVEEQTAIIYTGINGYLDDINLSQVQEFIEALREDLRNSKPEFGESIRTTKKLSAEAEELLKQSIEDVKQAFSV.

An ATP-binding site is contributed by 170–177; that stretch reads GDRQTGKT.

The protein belongs to the ATPase alpha/beta chains family. F-type ATPases have 2 components, CF(1) - the catalytic core - and CF(0) - the membrane proton channel. CF(1) has five subunits: alpha(3), beta(3), gamma(1), delta(1), epsilon(1). CF(0) has four main subunits: a, b, b' and c.

The protein localises to the plastid. The protein resides in the chloroplast thylakoid membrane. It carries out the reaction ATP + H2O + 4 H(+)(in) = ADP + phosphate + 5 H(+)(out). Produces ATP from ADP in the presence of a proton gradient across the membrane. The alpha chain is a regulatory subunit. In Gracilaria tenuistipitata var. liui (Red alga), this protein is ATP synthase subunit alpha, chloroplastic.